The following is a 689-amino-acid chain: Beta-adrenergic receptor kinase 1 (689 aa).

The N-terminal stretch occupies residues 1–190; the sequence is MADLEAVLAD…ELNIHLTMND (190 aa). The RGS domain occupies 54–175; that stretch reads TFEKIFSQKL…IESDKFTRFC (122 aa). The Protein kinase domain occupies 191-453; the sequence is FSVHRIIGRG…AQEVKESPFF (263 aa). Residues 197-205 and Lys220 each bind ATP; that span reads IGRGGFGEV. Asp317 (proton acceptor) is an active-site residue. The AGC-kinase C-terminal domain maps to 454 to 521; sequence RSLDWQMVFL…TISERWQQEV (68 aa). In terms of domain architecture, PH spans 558 to 652; the sequence is DCIMHGYMSK…WKKELRDAYR (95 aa). Phosphoserine is present on Ser670.

It belongs to the protein kinase superfamily. AGC Ser/Thr protein kinase family. GPRK subfamily. Interacts with the heterodimer formed by GNB1 and GNG2. Interacts with GIT1. Interacts with, and phosphorylates chemokine-stimulated CCR5. Interacts with ARRB1. Interacts with LPAR1 and LPAR2. Interacts with RALA in response to LPAR1 activation. ADRBK1 and RALA mutually inhibit each other's binding to LPAR1. Interacts with ADRB2. Expressed in peripheral blood leukocytes.

The protein resides in the cytoplasm. Its subcellular location is the cell membrane. The protein localises to the postsynapse. It localises to the presynapse. It catalyses the reaction [beta-adrenergic receptor] + ATP = [beta-adrenergic receptor]-phosphate + ADP + H(+). In contrast to other AGC family kinases, the catalytic activity is solely regulated by the binding of substrates and ligands, not by phosphorylation of the kinase domain. Functionally, specifically phosphorylates the agonist-occupied form of the beta-adrenergic and closely related receptors, probably inducing a desensitization of them. Key regulator of LPAR1 signaling. Competes with RALA for binding to LPAR1 thus affecting the signaling properties of the receptor. Desensitizes LPAR1 and LPAR2 in a phosphorylation-independent manner. Positively regulates ciliary smoothened (SMO)-dependent Hedgehog (Hh) signaling pathway by facilitating the trafficking of SMO into the cilium and the stimulation of SMO activity. Inhibits relaxation of airway smooth muscle in response to blue light. This Homo sapiens (Human) protein is Beta-adrenergic receptor kinase 1.